A 440-amino-acid chain; its full sequence is Kinetochore protein NUF2 homolog (440 aa).

Coiled coils occupy residues 142 to 239 (LGLL…LRSQ) and 299 to 386 (INEQ…RQTN).

Belongs to the NUF2 family. Component of the NDC80 complex, which consists of NDC80, NUF2, SPC24 and SPC25.

Its subcellular location is the chromosome. It is found in the centromere. Functionally, acts as a component of the essential kinetochore-associated NDC80 complex, which is required for chromosome segregation and spindle checkpoint activity to ensure proper cell division. The sequence is that of Kinetochore protein NUF2 homolog from Arabidopsis thaliana (Mouse-ear cress).